The primary structure comprises 364 residues: MKNIFLHSLTLENYRNFKNLELKTDNTPIILIGENGSGKTNILEAISLFYPGRGLRSAKLADICKASEDQCLVKALLQSKLGLAEFTTQFKRSSNRRITEYNESKIANNELSKFTSMVWLTPQMEGIFTSGSSDRRKFLDRIVYNFDSKHAELVSKYEYYMYERNKILAEDIRDDNWLKIIEEKMADMSSHIANNRLKTLEFMQQAIDELENEFPKADLSIDGIVEQKILDGKENIVNFITAELYQTRSKDKLLGRTSFGVHKSDFLVKHQKKNILAKFCSTGEQKAILIAIILAEMNYAIKLTKIAPILLLDEVFVHLDDKRRGYLIEFFTGLNMQLWVTATDLEGIENFANKAQLIKLPIIL.

Position 33–40 (33–40 (GENGSGKT)) interacts with ATP.

It belongs to the RecF family.

The protein resides in the cytoplasm. In terms of biological role, the RecF protein is involved in DNA metabolism; it is required for DNA replication and normal SOS inducibility. RecF binds preferentially to single-stranded, linear DNA. It also seems to bind ATP. The sequence is that of DNA replication and repair protein RecF from Rickettsia felis (strain ATCC VR-1525 / URRWXCal2) (Rickettsia azadi).